A 593-amino-acid polypeptide reads, in one-letter code: MSQALNFFVSSSSRSPATFTISRPSVFPSTGSLRLLVKKSLRTLVVEASSAAASDLDEPQSSPVLVSENGSGGVLSSATQEYGRNAAPGTDSSSIEVDTVTEAELKENGFRSTRRTKLICTIGPATCGFEQLERLAEGGMNVARINMCHGTREWHRMVIERLRRLNEEKGFAVAIMMDTEGSEIHMGDLGGASSAKAEDGEIWNFTVRSFDPPLPERTVTVNYDGFAEDVKVGDELLVDGGMVRFEVIEKIGPDVKCLCTDPGLLLPRANLTFWRDGKLVRERNAMLPTISSKDWLDIDFGIAEGVDFIAVSFVKSAEVIKHLKSYIQARARDSDISVIAKIESIDSLKNLEEIIQASDGAMVARGDLGAQIPLEQVPSEQQKIVQICRQLNRPVIVASQLLESMIEYPIPTRAEVADVSEAVRQRGDALMLSGESAMGQFPEKALTVLRSVSLRIERMWREQKRHEVIELPSIASSFSDSISEEICNSAAKMANNLEVDALFVYTKNGHMASLLSRCRPDCPIFAFTTTTSVRRRLNLQWGLMPFRLSFSDDMESNLNKTFSLLKARGMIKSGDLIIAVSDMLQSIQVMNVP.

The segment at 57-94 is disordered; it reads DEPQSSPVLVSENGSGGVLSSATQEYGRNAAPGTDSSS. Arg-144 serves as a coordination point for substrate. The K(+) site is built by Asn-146, Asp-178, and Thr-179. 146–149 contributes to the ATP binding site; it reads NMCH. Mg(2+) is bound at residue Glu-343. Residues Gly-366, Asp-367, and Ser-399 each contribute to the substrate site. Mg(2+) is bound at residue Asp-367.

This sequence belongs to the pyruvate kinase family. It depends on Mg(2+) as a cofactor. K(+) serves as cofactor. Highest levels in roots. Also found in stems, leaves and flowers.

The protein resides in the plastid. Its subcellular location is the chloroplast. The catalysed reaction is pyruvate + ATP = phosphoenolpyruvate + ADP + H(+). It functions in the pathway carbohydrate degradation; glycolysis; pyruvate from D-glyceraldehyde 3-phosphate: step 5/5. This chain is Pyruvate kinase isozyme A, chloroplastic, found in Nicotiana tabacum (Common tobacco).